A 152-amino-acid chain; its full sequence is Transcriptional repressor NrdR (152 aa).

A zinc finger spans residues 3–34 (CPYCNASDTKVIDSRLAAEGAQVRRRRSCNSC). The ATP-cone domain maps to 49 to 139 (PRIIKSSGKI…VYRDFQDIDA (91 aa)).

The protein belongs to the NrdR family. Zn(2+) serves as cofactor.

In terms of biological role, negatively regulates transcription of bacterial ribonucleotide reductase nrd genes and operons by binding to NrdR-boxes. The chain is Transcriptional repressor NrdR from Psychrobacter arcticus (strain DSM 17307 / VKM B-2377 / 273-4).